Here is a 361-residue protein sequence, read N- to C-terminus: Inactive 2'-5'-oligoadenylate synthase 1D (361 aa).

Belongs to the 2-5A synthase family. Interacts with OAS1A, the interaction inhibits OAS1A catalytic activity. Expressed specifically in oocytes (at protein level). Expressed at highest level in ovary with lesser amounts in intestine, brain, thymus lung, kidney, liver and uterus.

It is found in the cytoplasm. Does not have 2'-5'-oligoadenylate synthetase activity, but can bind double-stranded RNA. May play a role in the control of female fertility, possibly by binding to and inhibiting OAS1A. This chain is Inactive 2'-5'-oligoadenylate synthase 1D, found in Mus musculus (Mouse).